The chain runs to 65 residues: Oxiana weak toxin (65 aa).

Cystine bridges form between C3-C24, C6-C11, C17-C42, C46-C57, and C58-C63.

It belongs to the three-finger toxin family. Ancestral subfamily. Orphan group II sub-subfamily. In terms of tissue distribution, expressed by the venom gland.

Its subcellular location is the secreted. Binds to muscle and neuronal nicotinic acetylcholine receptors (nAChR). It binds to extracellular domain of rat alpha-7/CHRNA7 nAChR (IC(50)=2.2 uM) and to Torpedo californica membranes (IC(50)=30 uM). The chain is Oxiana weak toxin from Naja oxiana (Central Asian cobra).